A 172-amino-acid chain; its full sequence is Translationally-controlled tumor protein homolog (172 aa).

In terms of domain architecture, TCTP spans 1–172 (MIIYRDCISQ…FKDGLEIEKC (172 aa)). A Phosphoserine; by PLK1 modification is found at serine 46.

The protein belongs to the TCTP family.

The protein resides in the cytoplasm. Involved in calcium binding and microtubule stabilization. The protein is Translationally-controlled tumor protein homolog (TPT1) of Gallus gallus (Chicken).